We begin with the raw amino-acid sequence, 83 residues long: Delta-conotoxin-like Ac6.2 (83 aa).

Positions 1-22 are cleaved as a signal peptide; that stretch reads MKLTCVVIVAVLFLTAWTFVTA. A propeptide spanning residues 23–51 is cleaved from the precursor; it reads DDSRYGLKNLFPKARHEMKNPEASKLNKR. 3 disulfide bridges follow: cysteine 54/cysteine 69, cysteine 61/cysteine 73, and cysteine 68/cysteine 78. 2 positions are modified to 4-hydroxyproline: proline 57 and proline 65.

This sequence belongs to the conotoxin O1 superfamily. As to expression, expressed by the venom duct.

It localises to the secreted. In terms of biological role, delta-conotoxins bind to site 6 of voltage-gated sodium channels (Nav) and inhibit the inactivation process. This Conus achatinus (Little frog cone) protein is Delta-conotoxin-like Ac6.2.